The primary structure comprises 342 residues: Ribosomal RNA small subunit methyltransferase C (342 aa).

This sequence belongs to the methyltransferase superfamily. RsmC family. In terms of assembly, monomer.

The protein localises to the cytoplasm. The catalysed reaction is guanosine(1207) in 16S rRNA + S-adenosyl-L-methionine = N(2)-methylguanosine(1207) in 16S rRNA + S-adenosyl-L-homocysteine + H(+). Functionally, specifically methylates the guanine in position 1207 of 16S rRNA in the 30S particle. The protein is Ribosomal RNA small subunit methyltransferase C of Shewanella sp. (strain MR-4).